A 156-amino-acid chain; its full sequence is SsrA-binding protein (156 aa).

Positions 135-150 (KRDTIKDREWQRDRSR) are enriched in basic and acidic residues. The segment at 135–156 (KRDTIKDREWQRDRSRIMKKNT) is disordered.

This sequence belongs to the SmpB family.

It is found in the cytoplasm. Functionally, required for rescue of stalled ribosomes mediated by trans-translation. Binds to transfer-messenger RNA (tmRNA), required for stable association of tmRNA with ribosomes. tmRNA and SmpB together mimic tRNA shape, replacing the anticodon stem-loop with SmpB. tmRNA is encoded by the ssrA gene; the 2 termini fold to resemble tRNA(Ala) and it encodes a 'tag peptide', a short internal open reading frame. During trans-translation Ala-aminoacylated tmRNA acts like a tRNA, entering the A-site of stalled ribosomes, displacing the stalled mRNA. The ribosome then switches to translate the ORF on the tmRNA; the nascent peptide is terminated with the 'tag peptide' encoded by the tmRNA and targeted for degradation. The ribosome is freed to recommence translation, which seems to be the essential function of trans-translation. The protein is SsrA-binding protein of Legionella pneumophila (strain Corby).